Reading from the N-terminus, the 387-residue chain is Oxidase FUB9 (387 aa).

Positions 1–20 (MSRTNLPIQPAKMSDATSSK) are disordered. The FMN hydroxy acid dehydrogenase domain maps to 18–379 (SSKPQIFSIQ…TPAHLSILNA (362 aa)). Y44 is a binding site for a 2-oxocarboxylate. Positions 126, 150, and 178 each coordinate FMN. R187 contributes to the a 2-oxocarboxylate binding site. K250 contacts FMN. H274 acts as the Proton acceptor in catalysis. R277 serves as a coordination point for a 2-oxocarboxylate. FMN contacts are provided by residues 305-309 (DGGFR) and 328-329 (GR).

The protein belongs to the FMN-dependent alpha-hydroxy acid dehydrogenase family. It depends on FMN as a cofactor.

Its pathway is mycotoxin biosynthesis. Its function is as follows. Oxidase; part of the gene cluster that mediates the biosynthesis of fusaric acid, a mycotoxin with low to moderate toxicity to animals and humans, but with high phytotoxic properties. L-aspartate is suggested as fusaric acid amino acid precursor that is activated and further processed to O-acetyl-L-homoserine by cluster enzymes aspartate kinase FUB3 and homoserine O-acetyltransferase FUB5, as well as enzymes of the primary metabolism. The polyketide synthase (PKS) FUB1 generates the triketide trans-2-hexenal which is presumptively released by the hydrolase FUB4 and linked to the NRPS-bound amino acid precursor by NAD(P)-dependent dehydrogenase FUB6. FUB1, FUB4, and the non-canonical NRPS Fub8 may form an enzyme complex. Further processing of the NRPS-bound intermediate might be carried out by FUB6 and the sulfhydrylase FUB7, enabling a spontaneous electrocyclization to close the carbon backbone of fusaric acid. Dihydrofusaric acid is likely to be released via reduction by the thioester reductase (TR) domain of FUB8 whereupon the final oxidation to fusaric acid may (also) be performed by the FMN-dependent dehydrogenase FUB9. This chain is Oxidase FUB9, found in Fusarium oxysporum f. sp. lycopersici (strain 4287 / CBS 123668 / FGSC 9935 / NRRL 34936) (Fusarium vascular wilt of tomato).